Reading from the N-terminus, the 116-residue chain is Somatostatin (116 aa).

A signal peptide spans 1 to 24 (MLSCRLQCALAALSIVLALGGVTG). Positions 25 to 88 (APSDPRLRQF…QDEMRLELQR (64 aa)) are excised as a propeptide. An Alanine amide modification is found at Ala-43. The disordered stretch occupies residues 62–99 (QTENDALEPEDLSQAAEQDEMRLELQRSANSNPAMAPR). Cys-105 and Cys-116 are disulfide-bonded.

Belongs to the somatostatin family. In terms of processing, C-terminal amidation of the neuronostatin peptide is required for its biological activity, including for the regulation of mean arterial pressure. As to expression, expressed in the pancreas and the spleen (at protein level).

It is found in the secreted. Functionally, inhibits the secretion of pituitary hormones, including that of growth hormone/somatotropin (GH1), PRL, ACTH, luteinizing hormone (LH) and TSH. Also impairs ghrelin- and GnRH-stimulated secretion of GH1 and LH; the inhibition of ghrelin-stimulated secretion of GH1 can be further increased by neuronostatin. May enhance low-glucose-induced glucagon release by pancreatic alpha cells. This effect may be mediated by binding to GPR107 and PKA activation. May regulate cardiac contractile function. May compromise cardiomyocyte viability. In the central nervous system, may impair memory retention and may affect hippocampal excitability. May also have anxiolytic and anorexigenic effects. May play a role in arterial pressure regulation. May inhibit basal, but not ghrelin- or GnRH-stimulated secretion of GH1 or LH, but does not affect the release of other pituitary hormones, including PRL, ACTH, FSH or TSH. Potentiates inhibitory action of somatostatin on ghrelin-stimulated secretion of GH1, but not that on GnRH-stimulated secretion of LH. This chain is Somatostatin (SST), found in Sus scrofa (Pig).